Here is a 257-residue protein sequence, read N- to C-terminus: Zinc transporter ZupT (257 aa).

8 helical membrane-spanning segments follow: residues 5-25 (LILT…GVIG), 32-52 (VLAF…LMEM), 61-81 (GMSP…YFAL), 109-129 (AILL…ATYV), 137-157 (LGFG…LAVA), 171-191 (ILWA…TWLI), 195-215 (MISP…MVAL), and 236-256 (GVLC…TAGF). Residues asparagine 120 and glutamate 123 each contribute to the Fe(2+) site. Zn(2+) is bound by residues glutamate 123 and histidine 148. Asparagine 149, glutamate 152, and glutamate 181 together coordinate Fe(2+). A Zn(2+)-binding site is contributed by glutamate 152.

The protein belongs to the ZIP transporter (TC 2.A.5) family. ZupT subfamily.

It localises to the cell inner membrane. The catalysed reaction is Zn(2+)(in) = Zn(2+)(out). Its function is as follows. Mediates zinc uptake. May also transport other divalent cations. This chain is Zinc transporter ZupT, found in Enterobacter sp. (strain 638).